The sequence spans 157 residues: UPF0262 protein RL0614 (157 aa).

The protein belongs to the UPF0262 family.

The sequence is that of UPF0262 protein RL0614 from Rhizobium johnstonii (strain DSM 114642 / LMG 32736 / 3841) (Rhizobium leguminosarum bv. viciae).